A 293-amino-acid chain; its full sequence is Aspartate carbamoyltransferase catalytic subunit (293 aa).

Residues Arg-50 and Thr-51 each coordinate carbamoyl phosphate. Lys-78 lines the L-aspartate pocket. Residues Arg-100, His-127, and Gln-130 each contribute to the carbamoyl phosphate site. Arg-160 and Arg-210 together coordinate L-aspartate. Ala-253 and Pro-254 together coordinate carbamoyl phosphate.

It belongs to the aspartate/ornithine carbamoyltransferase superfamily. ATCase family. As to quaternary structure, heterododecamer (2C3:3R2) of six catalytic PyrB chains organized as two trimers (C3), and six regulatory PyrI chains organized as three dimers (R2).

The catalysed reaction is carbamoyl phosphate + L-aspartate = N-carbamoyl-L-aspartate + phosphate + H(+). It functions in the pathway pyrimidine metabolism; UMP biosynthesis via de novo pathway; (S)-dihydroorotate from bicarbonate: step 2/3. Functionally, catalyzes the condensation of carbamoyl phosphate and aspartate to form carbamoyl aspartate and inorganic phosphate, the committed step in the de novo pyrimidine nucleotide biosynthesis pathway. The chain is Aspartate carbamoyltransferase catalytic subunit from Staphylococcus epidermidis (strain ATCC 35984 / DSM 28319 / BCRC 17069 / CCUG 31568 / BM 3577 / RP62A).